The primary structure comprises 207 residues: Phosphoserine phosphatase (207 aa).

Aspartate 8 acts as the Nucleophile in catalysis. Mg(2+)-binding residues include aspartate 8 and aspartate 10. Aspartate 10 serves as the catalytic Proton donor. Residues glutamate 17, arginine 53, 96 to 97 (SG), and lysine 141 each bind substrate. Aspartate 164 serves as a coordination point for Mg(2+). Asparagine 167 lines the substrate pocket.

The protein belongs to the HAD-like hydrolase superfamily. SerB family. Mg(2+) serves as cofactor.

It carries out the reaction O-phospho-L-serine + H2O = L-serine + phosphate. It catalyses the reaction O-phospho-D-serine + H2O = D-serine + phosphate. The protein operates within amino-acid biosynthesis; L-serine biosynthesis; L-serine from 3-phospho-D-glycerate: step 3/3. The polypeptide is Phosphoserine phosphatase (Campylobacter jejuni subsp. doylei (strain ATCC BAA-1458 / RM4099 / 269.97)).